A 379-amino-acid polypeptide reads, in one-letter code: Sensor histidine kinase YhcY (379 aa).

The Histidine kinase domain maps to 185-373; sequence RLAQELHDSV…KLSIRLPLKS (189 aa). The residue at position 191 (H191) is a Phosphohistidine; by autocatalysis.

It carries out the reaction ATP + protein L-histidine = ADP + protein N-phospho-L-histidine.. Its function is as follows. Member of the two-component regulatory system YhcY/YhcZ. Probably activates YhcZ by phosphorylation. This is Sensor histidine kinase YhcY (yhcY) from Bacillus subtilis (strain 168).